A 145-amino-acid polypeptide reads, in one-letter code: Putative antiporter subunit mnhG2 (145 aa).

3 helical membrane-spanning segments follow: residues 11–31 (IAAV…IGIV), 51–71 (VLLT…FFSV), and 72–92 (RLLL…HLVA).

The protein belongs to the CPA3 antiporters (TC 2.A.63) subunit G family. In terms of assembly, may form a heterooligomeric complex that consists of seven subunits: mnhA2, mnhB2, mnhC2, mnhD2, mnhE2, mnhF2 and mnhG2.

It is found in the cell membrane. The sequence is that of Putative antiporter subunit mnhG2 (mnhG2) from Staphylococcus aureus (strain COL).